Reading from the N-terminus, the 117-residue chain is Putative hydrolase fragment YghX (117 aa).

The tract at residues 91 to 117 (DGLSSVGGYPGNDDKGRELQQQVDPTN) is disordered.

This is Putative hydrolase fragment YghX (yghX) from Escherichia coli (strain K12).